The chain runs to 386 residues: Alanine racemase 1 (386 aa).

Lysine 38 serves as the catalytic Proton acceptor; specific for D-alanine. Lysine 38 carries the N6-(pyridoxal phosphate)lysine modification. Arginine 136 contributes to the substrate binding site. Tyrosine 267 serves as the catalytic Proton acceptor; specific for L-alanine. Methionine 315 contributes to the substrate binding site.

The protein belongs to the alanine racemase family. Requires pyridoxal 5'-phosphate as cofactor.

The catalysed reaction is L-alanine = D-alanine. It functions in the pathway amino-acid biosynthesis; D-alanine biosynthesis; D-alanine from L-alanine: step 1/1. Functionally, catalyzes the interconversion of L-alanine and D-alanine. May also act on other amino acids. In Clostridium acetobutylicum (strain ATCC 824 / DSM 792 / JCM 1419 / IAM 19013 / LMG 5710 / NBRC 13948 / NRRL B-527 / VKM B-1787 / 2291 / W), this protein is Alanine racemase 1 (alr1).